The chain runs to 786 residues: LPS-assembly protein LptD (786 aa).

A signal peptide spans Met1 to Ala39. The interval Pro767 to Glu786 is disordered. Over residues Thr770–Met779 the composition is skewed to pro residues.

Belongs to the LptD family. Component of the lipopolysaccharide transport and assembly complex. Interacts with LptE and LptA.

Its subcellular location is the cell outer membrane. Its function is as follows. Together with LptE, is involved in the assembly of lipopolysaccharide (LPS) at the surface of the outer membrane. In Burkholderia cenocepacia (strain HI2424), this protein is LPS-assembly protein LptD.